Consider the following 55-residue polypeptide: MIAWALIFLAVAIAAGVLGFGGIIGAQAWIAQVLFILFLVFFLVSLLSGRKPPVT.

The next 2 helical transmembrane spans lie at 4–24 and 28–48; these read WALI…GGII and AWIA…SLLS.

It belongs to the UPF0391 family.

It localises to the cell membrane. The polypeptide is UPF0391 membrane protein Sfum_0248 (Syntrophobacter fumaroxidans (strain DSM 10017 / MPOB)).